Here is a 360-residue protein sequence, read N- to C-terminus: Phospho-N-acetylmuramoyl-pentapeptide-transferase (360 aa).

The next 10 helical transmembrane spans lie at 27-47, 72-92, 94-114, 135-155, 167-187, 199-219, 236-256, 263-283, 289-309, and 337-357; these read GAIA…IKSL, TPTM…LLWA, LSNH…AIGF, LACE…LGTP, GYVV…IVAS, GLAI…AYLV, AGEL…FLWF, IFMG…IAVA, VLAI…VQVV, and QVVV…LSTL.

Belongs to the glycosyltransferase 4 family. MraY subfamily. The cofactor is Mg(2+).

It is found in the cell inner membrane. The enzyme catalyses UDP-N-acetyl-alpha-D-muramoyl-L-alanyl-gamma-D-glutamyl-meso-2,6-diaminopimeloyl-D-alanyl-D-alanine + di-trans,octa-cis-undecaprenyl phosphate = di-trans,octa-cis-undecaprenyl diphospho-N-acetyl-alpha-D-muramoyl-L-alanyl-D-glutamyl-meso-2,6-diaminopimeloyl-D-alanyl-D-alanine + UMP. The protein operates within cell wall biogenesis; peptidoglycan biosynthesis. In terms of biological role, catalyzes the initial step of the lipid cycle reactions in the biosynthesis of the cell wall peptidoglycan: transfers peptidoglycan precursor phospho-MurNAc-pentapeptide from UDP-MurNAc-pentapeptide onto the lipid carrier undecaprenyl phosphate, yielding undecaprenyl-pyrophosphoryl-MurNAc-pentapeptide, known as lipid I. This is Phospho-N-acetylmuramoyl-pentapeptide-transferase from Beijerinckia indica subsp. indica (strain ATCC 9039 / DSM 1715 / NCIMB 8712).